The following is a 294-amino-acid chain: 4-hydroxy-tetrahydrodipicolinate synthase (294 aa).

A pyruvate-binding site is contributed by Thr47. Tyr136 functions as the Proton donor/acceptor in the catalytic mechanism. The active-site Schiff-base intermediate with substrate is Lys164. Residue Val206 coordinates pyruvate.

It belongs to the DapA family. Homotetramer; dimer of dimers.

The protein resides in the cytoplasm. It carries out the reaction L-aspartate 4-semialdehyde + pyruvate = (2S,4S)-4-hydroxy-2,3,4,5-tetrahydrodipicolinate + H2O + H(+). It functions in the pathway amino-acid biosynthesis; L-lysine biosynthesis via DAP pathway; (S)-tetrahydrodipicolinate from L-aspartate: step 3/4. Catalyzes the condensation of (S)-aspartate-beta-semialdehyde [(S)-ASA] and pyruvate to 4-hydroxy-tetrahydrodipicolinate (HTPA). This chain is 4-hydroxy-tetrahydrodipicolinate synthase, found in Nostoc punctiforme (strain ATCC 29133 / PCC 73102).